The following is a 411-amino-acid chain: MDAALLHSLLEANCSLALAEELLLDGWGPPLDPEGPYSYCNTTLDQIGTCWPRSAAGALVERPCPEYFNGVKYNTTRNAYRECLENGTWASKINYSQCEPILDDKQRKYDLHYRIALVVNYLGHCVSVAALVAAFLLFLALRSIRCLRNVIHWNLITTFILRNVMWFLLQLVDHEVHESNEVWCRCITTIFNYFVVTNFFWMFVEGCYLHTAIVMTYSTERLRKCLFLFIGWCIPFPIIVAWAIGKLYYENEQCWFGKEPGDLVDYIYQGPIILVLLINFVFLFNIVRILMTKLRASTTSETIQYRKAVKATLVLLPLLGITYMLFFVNPGEDDLSQIMFIYFNSFLQSFQGFFVSVFYCFFNGEVRSAVRKRWHRWQDHHSLRVPMARAMSIPTSPTRISFHSIKQTAAV.

The segment at residues 1 to 19 (MDAALLHSLLEANCSLALA) is a signal peptide (not cleaved). At 1 to 108 (MDAALLHSLL…EPILDDKQRK (108 aa)) the chain is on the extracellular side. Residues Asn13, Asn41, Asn74, Asn86, and Asn94 are each glycosylated (N-linked (GlcNAc...) asparagine). Intrachain disulfides connect Cys14/Cys50, Cys40/Cys83, Trp51/Arg77, and Cys64/Cys98. Residues 109 to 139 (YDLHYRIALVVNYLGHCVSVAALVAAFLLFL) traverse the membrane as a helical segment. Residues 140–146 (ALRSIRC) are Cytoplasmic-facing. The chain crosses the membrane as a helical span at residues 147 to 171 (LRNVIHWNLITTFILRNVMWFLLQL). Residues 172–185 (VDHEVHESNEVWCR) are Extracellular-facing. Residues Cys184 and Cys254 are joined by a disulfide bond. The chain crosses the membrane as a helical span at residues 186–214 (CITTIFNYFVVTNFFWMFVEGCYLHTAIV). Residues 215–221 (MTYSTER) lie on the Cytoplasmic side of the membrane. The chain crosses the membrane as a helical span at residues 222-249 (LRKCLFLFIGWCIPFPIIVAWAIGKLYY). The Extracellular segment spans residues 250–265 (ENEQCWFGKEPGDLVD). The chain crosses the membrane as a helical span at residues 266-291 (YIYQGPIILVLLINFVFLFNIVRILM). The Cytoplasmic segment spans residues 292–302 (TKLRASTTSET). Residues 303–327 (IQYRKAVKATLVLLPLLGITYMLFF) form a helical membrane-spanning segment. Topologically, residues 328-334 (VNPGEDD) are extracellular. A helical transmembrane segment spans residues 335-364 (LSQIMFIYFNSFLQSFQGFFVSVFYCFFNG). Over 365–411 (EVRSAVRKRWHRWQDHHSLRVPMARAMSIPTSPTRISFHSIKQTAAV) the chain is Cytoplasmic.

This sequence belongs to the G-protein coupled receptor 2 family. In terms of assembly, monomer. Interacts (via N-terminal extracellular domain) with CRF, UCN, UCN2 and UCN3. Has highest affinity for UCN, and considerably lower affinity for CRF, UNC2 and UCN3. In terms of processing, a N-glycosylation site within the signal peptide impedes its proper cleavage and function.

It is found in the cell membrane. Functionally, G-protein coupled receptor for CRH (corticotropin-releasing factor), UCN (urocortin), UCN2 and UCN3. Has high affinity for UCN. Ligand binding causes a conformation change that triggers signaling via guanine nucleotide-binding proteins (G proteins) and down-stream effectors, such as adenylate cyclase. Promotes the activation of adenylate cyclase, leading to increased intracellular cAMP levels. In Homo sapiens (Human), this protein is Corticotropin-releasing factor receptor 2 (CRHR2).